Here is a 347-residue protein sequence, read N- to C-terminus: Homeobox protein knotted-1-like 9 (347 aa).

Residues 1-17 (MESFASLAGGGSSSTTA) show a composition bias toward low complexity. Disordered regions lie at residues 1–36 (MESF…PPPL), 122–145 (QQLD…DVPD), and 179–206 (DSNC…DPSD). Positions 22–36 (LIPPENPDRISPPPL) are enriched in pro residues. Acidic residues predominate over residues 188-203 (SEEEQDTSCPEAEEID). The ELK domain occupies 208 to 228 (QLKHQLLMKYGGSLGDLRQAF). Residues 229 to 293 (SKRTKKGKLP…NQRKRHWKPT (65 aa)) constitute a DNA-binding region (homeobox; TALE-type).

Belongs to the TALE/KNOX homeobox family.

Its subcellular location is the nucleus. The protein is Homeobox protein knotted-1-like 9 of Oryza sativa subsp. japonica (Rice).